A 72-amino-acid polypeptide reads, in one-letter code: Large ribosomal subunit protein bL31 (72 aa).

Positions 16, 18, 38, and 41 each coordinate Zn(2+).

The protein belongs to the bacterial ribosomal protein bL31 family. Type A subfamily. In terms of assembly, part of the 50S ribosomal subunit. The cofactor is Zn(2+).

Binds the 23S rRNA. This is Large ribosomal subunit protein bL31 from Francisella tularensis subsp. holarctica (strain LVS).